We begin with the raw amino-acid sequence, 63 residues long: 2-hydroxymuconate tautomerase (63 aa).

The active-site Proton acceptor; via imino nitrogen is Pro2.

The protein belongs to the 4-oxalocrotonate tautomerase family. Homohexamer.

The catalysed reaction is (2Z,4E)-2-hydroxyhexa-2,4-dienedioate = (3E)-2-oxohex-3-enedioate. Its pathway is xenobiotic degradation; toluene degradation. It participates in xenobiotic degradation; xylene degradation. Its function is as follows. Catalyzes the ketonization of 2-hydroxymuconate stereoselectively to yield 2-oxo-3-hexenedioate. The polypeptide is 2-hydroxymuconate tautomerase (xylH) (Pseudomonas putida (Arthrobacter siderocapsulatus)).